The following is a 1343-amino-acid chain: ABC multidrug transporter atrD (1343 aa).

Over residues 1–10 (MSPLETNPLS) the composition is skewed to polar residues. Residues 1-67 (MSPLETNPLS…HRPKSSSSNN (67 aa)) are disordered. Residues 20–31 (ETSTTEEQASTP) are compositionally biased toward low complexity. An N-linked (GlcNAc...) asparagine glycan is attached at Asn-99. The next 4 helical transmembrane spans lie at 114–134 (ILIM…LPLF), 163–183 (YFVY…VGFI), 235–255 (KVGL…IAYV), and 263–283 (ICSS…QFII). Residues 115 to 403 (LIMVISTICA…VSPNAQAFTN (289 aa)) form the ABC transmembrane type-1 1 domain. Residue Asn-309 is glycosylated (N-linked (GlcNAc...) asparagine). Helical transmembrane passes span 339–359 (IVMG…YGLG) and 366–386 (FLVD…AILI). An ABC transporter 1 domain is found at 438-683 (IELRNVKHIY…GGAYRKLVEA (246 aa)). An ATP-binding site is contributed by 473 to 480 (GPSGSGKS). N-linked (GlcNAc...) asparagine glycosylation is present at Asn-545. 2 helical membrane-spanning segments follow: residues 773-793 (MLIG…QAVL) and 820-840 (LMFF…GAAF). An ABC transmembrane type-1 2 domain is found at 774-1063 (LIGLVFSVLA…VFSFAPDMGK (290 aa)). A glycan (N-linked (GlcNAc...) asparagine) is linked at Asn-872. 4 helical membrane-spanning segments follow: residues 887-907 (HLSG…TTLG), 920-942 (LALV…FYML), 1010-1030 (ALVF…LGHH), and 1037-1057 (FFVC…VFSF). An N-linked (GlcNAc...) asparagine glycan is attached at Asn-1083. In terms of domain architecture, ABC transporter 2 spans 1098 to 1336 (IEFRNVHFRY…KGRYYELVNL (239 aa)). 1133 to 1140 (GPSGCGKS) is a binding site for ATP.

This sequence belongs to the ABC transporter superfamily. ABCB family. Multidrug resistance exporter (TC 3.A.1.201) subfamily.

It localises to the cell membrane. Fenamirol efflux transporter activity is inhibited by the cyclosporin derivative PSC 833, nigericin, reserpine and valinomycin. The effect of reserpine is transiant, while that of the cyclosporin derivative PSC 833, nigericin and valinomycin is proportional to the time of exposure. Cyclohexinmide has inhibitory effect only when applied prior to addition of the fungicide. Its function is as follows. Pleiotropic ABC efflux transporter involved in the protection of the cells against a wide range of toxic compounds. Confers resistance to the azole fenarimol via efflux transport. May also be involved in the secretion of penicillin. This Emericella nidulans (strain FGSC A4 / ATCC 38163 / CBS 112.46 / NRRL 194 / M139) (Aspergillus nidulans) protein is ABC multidrug transporter atrD.